Consider the following 188-residue polypeptide: Potassium-transporting ATPase KdpC subunit (188 aa).

Residues 13–33 form a helical membrane-spanning segment; sequence MTAIFWIGCGLAYPLIFTGFA.

This sequence belongs to the KdpC family. In terms of assembly, the system is composed of three essential subunits: KdpA, KdpB and KdpC.

It is found in the cell inner membrane. Functionally, part of the high-affinity ATP-driven potassium transport (or Kdp) system, which catalyzes the hydrolysis of ATP coupled with the electrogenic transport of potassium into the cytoplasm. This subunit acts as a catalytic chaperone that increases the ATP-binding affinity of the ATP-hydrolyzing subunit KdpB by the formation of a transient KdpB/KdpC/ATP ternary complex. This is Potassium-transporting ATPase KdpC subunit from Gloeobacter violaceus (strain ATCC 29082 / PCC 7421).